The primary structure comprises 809 residues: Ribonuclease Z 1 (809 aa).

Residues 74 to 93 (ISSPDTYDSSSSSSTTSVSD) are disordered.

The protein belongs to the RNase Z family. Zn(2+) serves as cofactor.

It is found in the nucleus. The protein resides in the cytoplasm. It carries out the reaction Endonucleolytic cleavage of RNA, removing extra 3' nucleotides from tRNA precursor, generating 3' termini of tRNAs. A 3'-hydroxy group is left at the tRNA terminus and a 5'-phosphoryl group is left at the trailer molecule.. In terms of biological role, zinc phosphodiesterase, which displays some tRNA 3'-processing endonuclease activity. May be involved in tRNA maturation, by removing a 3'-trailer from precursor tRNA. The sequence is that of Ribonuclease Z 1 (trz1) from Schizosaccharomyces pombe (strain 972 / ATCC 24843) (Fission yeast).